We begin with the raw amino-acid sequence, 434 residues long: Methylenetetrahydrofolate--tRNA-(uracil-5-)-methyltransferase TrmFO (434 aa).

9–14 (GAGLAG) contacts FAD.

The protein belongs to the MnmG family. TrmFO subfamily. It depends on FAD as a cofactor.

It localises to the cytoplasm. It carries out the reaction uridine(54) in tRNA + (6R)-5,10-methylene-5,6,7,8-tetrahydrofolate + NADH + H(+) = 5-methyluridine(54) in tRNA + (6S)-5,6,7,8-tetrahydrofolate + NAD(+). The catalysed reaction is uridine(54) in tRNA + (6R)-5,10-methylene-5,6,7,8-tetrahydrofolate + NADPH + H(+) = 5-methyluridine(54) in tRNA + (6S)-5,6,7,8-tetrahydrofolate + NADP(+). Its function is as follows. Catalyzes the folate-dependent formation of 5-methyl-uridine at position 54 (M-5-U54) in all tRNAs. The polypeptide is Methylenetetrahydrofolate--tRNA-(uracil-5-)-methyltransferase TrmFO (Listeria innocua serovar 6a (strain ATCC BAA-680 / CLIP 11262)).